The primary structure comprises 204 residues: N-(5'-phosphoribosyl)anthranilate isomerase (204 aa).

Belongs to the TrpF family.

It catalyses the reaction N-(5-phospho-beta-D-ribosyl)anthranilate = 1-(2-carboxyphenylamino)-1-deoxy-D-ribulose 5-phosphate. It participates in amino-acid biosynthesis; L-tryptophan biosynthesis; L-tryptophan from chorismate: step 3/5. The sequence is that of N-(5'-phosphoribosyl)anthranilate isomerase from Geobacter sp. (strain M21).